We begin with the raw amino-acid sequence, 162 residues long: Putative pre-16S rRNA nuclease (162 aa).

It belongs to the YqgF nuclease family.

The protein localises to the cytoplasm. Functionally, could be a nuclease involved in processing of the 5'-end of pre-16S rRNA. The protein is Putative pre-16S rRNA nuclease of Brucella abortus (strain S19).